The primary structure comprises 208 residues: Ciliary-associated calcium-binding coiled-coil protein 1 (208 aa).

Testis-specific. Expressed in spermatocytes and round spermatids (at protein level).

It localises to the cytoplasm. It is found in the cytoskeleton. Its subcellular location is the microtubule organizing center. The protein localises to the centrosome. The protein resides in the cell projection. It localises to the cilium. It is found in the flagellum. Functionally, calcium-binding protein. May be involved in the control of sperm flagellar movement. The polypeptide is Ciliary-associated calcium-binding coiled-coil protein 1 (Mus musculus (Mouse)).